Here is a 481-residue protein sequence, read N- to C-terminus: Glutamate--tRNA ligase (481 aa).

The 'HIGH' region motif lies at 11–21 (PSPTGLLHIGN). The short motif at 255 to 259 (KLSKR) is the 'KMSKS' region element. ATP is bound at residue Lys-258.

Belongs to the class-I aminoacyl-tRNA synthetase family. Glutamate--tRNA ligase type 1 subfamily. In terms of assembly, monomer.

It localises to the cytoplasm. It carries out the reaction tRNA(Glu) + L-glutamate + ATP = L-glutamyl-tRNA(Glu) + AMP + diphosphate. Functionally, catalyzes the attachment of glutamate to tRNA(Glu) in a two-step reaction: glutamate is first activated by ATP to form Glu-AMP and then transferred to the acceptor end of tRNA(Glu). In Streptococcus pyogenes serotype M3 (strain ATCC BAA-595 / MGAS315), this protein is Glutamate--tRNA ligase.